The primary structure comprises 34 residues: Photosystem II reaction center protein M (34 aa).

The helical transmembrane segment at 5 to 25 (ILAFIATALFILVPTAFLLII) threads the bilayer.

Belongs to the PsbM family. PSII is composed of 1 copy each of membrane proteins PsbA, PsbB, PsbC, PsbD, PsbE, PsbF, PsbH, PsbI, PsbJ, PsbK, PsbL, PsbM, PsbT, PsbX, PsbY, PsbZ, Psb30/Ycf12, at least 3 peripheral proteins of the oxygen-evolving complex and a large number of cofactors. It forms dimeric complexes.

The protein localises to the plastid. It is found in the chloroplast thylakoid membrane. One of the components of the core complex of photosystem II (PSII). PSII is a light-driven water:plastoquinone oxidoreductase that uses light energy to abstract electrons from H(2)O, generating O(2) and a proton gradient subsequently used for ATP formation. It consists of a core antenna complex that captures photons, and an electron transfer chain that converts photonic excitation into a charge separation. This subunit is found at the monomer-monomer interface. The sequence is that of Photosystem II reaction center protein M from Ceratophyllum demersum (Rigid hornwort).